Consider the following 553-residue polypeptide: ATP synthase F(1) complex subunit alpha, mitochondrial (553 aa).

The transit peptide at 1–43 directs the protein to the mitochondrion; it reads MLSVRVAAAVARALPRRAGLVSKNALGSSFIAARNLHASNSRL. Position 44 is a pyrrolidone carboxylic acid (Q44). 2 positions are modified to phosphoserine: S53 and S65. S76 bears the Phosphoserine; alternate mark. S76 is a glycosylation site (O-linked (GlcNAc) serine; alternate). S106 is subject to Phosphoserine. N6-acetyllysine is present on residues K123, K126, and K132. T134 carries the post-translational modification Phosphothreonine. The residue at position 161 (K161) is an N6-acetyllysine; alternate. K161 is modified (N6-succinyllysine; alternate). The residue at position 166 (S166) is a Phosphoserine. At K167 the chain carries N6-acetyllysine; alternate. K167 is modified (N6-succinyllysine; alternate). At S184 the chain carries Phosphoserine. Residue R204 is modified to Omega-N-methylarginine. The ATP site is built by Q215, G217, K218, T219, and S220. T219 is a binding site for Mg(2+). N6-acetyllysine; alternate occurs at positions 230 and 239. K230 and K239 each carry N6-succinyllysine; alternate. The residue at position 240 (K240) is an N6-acetyllysine. 2 positions are modified to N6-acetyllysine; alternate: K261 and K305. Residues K261 and K305 each carry the N6-succinyllysine; alternate modification. A Mg(2+)-binding site is contributed by D312. K427 is modified (N6-acetyllysine; alternate). K427 carries the post-translational modification N6-succinyllysine; alternate. K434 bears the N6-acetyllysine mark. ATP contacts are provided by Q473 and Q475. N6-acetyllysine; alternate occurs at positions 498, 506, 531, and 539. K498, K506, K531, and K539 each carry N6-succinyllysine; alternate. N6-acetyllysine is present on K541.

The protein belongs to the ATPase alpha/beta chains family. In terms of assembly, homotrimer. Component of the ATP synthase complex composed at least of ATP5F1A/subunit alpha, ATP5F1B/subunit beta, ATP5MC1/subunit c (homooctomer), MT-ATP6/subunit a, MT-ATP8/subunit 8, ATP5ME/subunit e, ATP5MF/subunit f, ATP5MG/subunit g, ATP5MK/subunit k, ATP5MJ/subunit j, ATP5F1C/subunit gamma, ATP5F1D/subunit delta, ATP5F1E/subunit epsilon, ATP5PF/subunit F6, ATP5PB/subunit b, ATP5PD/subunit d, ATP5PO/subunit OSCP. ATP synthase complex consists of a soluble F(1) head domain (subunits alpha(3) and beta(3)) - the catalytic core - and a membrane F(0) domain - the membrane proton channel (subunits c, a, 8, e, f, g, k and j). These two domains are linked by a central stalk (subunits gamma, delta, and epsilon) rotating inside the F1 region and a stationary peripheral stalk (subunits F6, b, d, and OSCP). Interacts with ATPAF2. Interacts with HRG; the interaction occurs on the surface of T-cells and alters the cell morphology when associated with concanavalin (in vitro). Interacts with PLG (angiostatin peptide); the interaction inhibits most of the angiogenic properties of angiostatin. Interacts with BLOC1S1. Interacts with BCL2L1 isoform BCL-X(L); the interaction mediates the association of BCL2L1 isoform BCL-X(L) with the mitochondrial membrane F(1)F(0) ATP synthase and enhances neurons metabolic efficiency. Interacts with CLN5 and PPT1. Interacts with S100A1; this interaction increases F1-ATPase activity. Interacts with ABCB7; this interaction allows the regulation of cellular iron homeostasis and cellular reactive oxygen species (ROS) levels in cardiomyocytes. Acetylated on lysine residues. BLOC1S1 is required for acetylation. Heart muscle (at protein level). Heart and liver.

The protein localises to the mitochondrion inner membrane. Its subcellular location is the cell membrane. Subunit alpha, of the mitochondrial membrane ATP synthase complex (F(1)F(0) ATP synthase or Complex V) that produces ATP from ADP in the presence of a proton gradient across the membrane which is generated by electron transport complexes of the respiratory chain. ATP synthase complex consist of a soluble F(1) head domain - the catalytic core - and a membrane F(1) domain - the membrane proton channel. These two domains are linked by a central stalk rotating inside the F(1) region and a stationary peripheral stalk. During catalysis, ATP synthesis in the catalytic domain of F(1) is coupled via a rotary mechanism of the central stalk subunits to proton translocation. In vivo, can only synthesize ATP although its ATP hydrolase activity can be activated artificially in vitro. With the catalytic subunit beta (ATP5F1B), forms the catalytic core in the F(1) domain. Subunit alpha does not bear the catalytic high-affinity ATP-binding sites. The chain is ATP synthase F(1) complex subunit alpha, mitochondrial from Bos taurus (Bovine).